The sequence spans 250 residues: Dihydroorotate dehydrogenase B (NAD(+)), electron transfer subunit (250 aa).

Residues 1–94 (MKVVAQEEIA…MGPQGNGFDL (94 aa)) form the FAD-binding FR-type domain. FAD-binding positions include 45 to 48 (RPIS), 62 to 64 (IYR), and 69 to 70 (GT). The [2Fe-2S] cluster site is built by cysteine 214, cysteine 219, cysteine 222, and cysteine 237.

The protein belongs to the PyrK family. As to quaternary structure, heterotetramer of 2 PyrK and 2 PyrD type B subunits. It depends on [2Fe-2S] cluster as a cofactor. FAD is required as a cofactor.

It functions in the pathway pyrimidine metabolism; UMP biosynthesis via de novo pathway; orotate from (S)-dihydroorotate (NAD(+) route): step 1/1. Responsible for channeling the electrons from the oxidation of dihydroorotate from the FMN redox center in the PyrD type B subunit to the ultimate electron acceptor NAD(+). The sequence is that of Dihydroorotate dehydrogenase B (NAD(+)), electron transfer subunit from Streptococcus pneumoniae serotype 4 (strain ATCC BAA-334 / TIGR4).